The primary structure comprises 54 residues: UPF0391 membrane protein Daro_2080 (54 aa).

A run of 2 helical transmembrane segments spans residues 5 to 25 (AIVF…GIAA) and 30 to 50 (IAKI…VMGF).

This sequence belongs to the UPF0391 family.

Its subcellular location is the cell membrane. The chain is UPF0391 membrane protein Daro_2080 from Dechloromonas aromatica (strain RCB).